Reading from the N-terminus, the 245-residue chain is Anti-Pycsar protein Apyc1 (245 aa).

Positions F19–H219 are beta-lactamase-like. The Zn(2+) site is built by H61, H63, D65, H66, H145, D165, and H219.

This sequence belongs to the anti-Pycsar protein Apyc1 family. As to quaternary structure, homodimer. Zn(2+) serves as cofactor.

The catalysed reaction is 3',5'-cyclic CMP + H2O = CMP + H(+). It carries out the reaction 3',5'-cyclic UMP + H2O = UMP + H(+). Functionally, counteracts the endogenous Pycsar antiviral defense system. Phosphodiesterase that enables metal-dependent hydrolysis of host cyclic nucleotide Pycsar defense signals such as cCMP and cUMP. This Paenibacillus sp. (strain J14) protein is Anti-Pycsar protein Apyc1.